We begin with the raw amino-acid sequence, 133 residues long: L-ectoine synthase (133 aa).

This sequence belongs to the ectoine synthase family.

The catalysed reaction is (2S)-4-acetamido-2-aminobutanoate = L-ectoine + H2O. The protein operates within amine and polyamine biosynthesis; ectoine biosynthesis; L-ectoine from L-aspartate 4-semialdehyde: step 3/3. In terms of biological role, catalyzes the circularization of gamma-N-acetyl-alpha,gamma-diaminobutyric acid (ADABA) to ectoine (1,4,5,6-tetrahydro-2-methyl-4-pyrimidine carboxylic acid), which is an excellent osmoprotectant. This is L-ectoine synthase from Bordetella petrii (strain ATCC BAA-461 / DSM 12804 / CCUG 43448).